Reading from the N-terminus, the 124-residue chain is MSRALIKFIRLSPTKARLIAREVQGMNAELALASLKFMPNKGAKFIANAISSAVANGGFEANEVIVSSCRVDAGAVLKRFRPRARGSASRIRKPTSHILVEVSKAEVSAEKTTKAKKASVKKES.

This sequence belongs to the universal ribosomal protein uL22 family. Part of the 50S ribosomal subunit.

Its function is as follows. This protein binds specifically to 23S rRNA; its binding is stimulated by other ribosomal proteins, e.g. L4, L17, and L20. It is important during the early stages of 50S assembly. It makes multiple contacts with different domains of the 23S rRNA in the assembled 50S subunit and ribosome. In terms of biological role, the globular domain of the protein is located near the polypeptide exit tunnel on the outside of the subunit, while an extended beta-hairpin is found that lines the wall of the exit tunnel in the center of the 70S ribosome. This is Large ribosomal subunit protein uL22 from Campylobacter lari (strain RM2100 / D67 / ATCC BAA-1060).